A 155-amino-acid chain; its full sequence is Small ribosomal subunit protein uS7c (155 aa).

Belongs to the universal ribosomal protein uS7 family. In terms of assembly, part of the 30S ribosomal subunit.

Its subcellular location is the plastid. The protein localises to the chloroplast. In terms of biological role, one of the primary rRNA binding proteins, it binds directly to 16S rRNA where it nucleates assembly of the head domain of the 30S subunit. The protein is Small ribosomal subunit protein uS7c (rps7) of Aristolochia macrophylla (Dutchman's pipe vine).